We begin with the raw amino-acid sequence, 40 residues long: Neutral phospholipase A2 homolog cannitoxin beta chain 2 (40 aa).

Heterotrimer of alpha, beta, and gamma chains; non-covalently linked. Expressed by the venom gland.

The protein localises to the secreted. Functionally, heterotrimer: Snake venom phospholipase A2 (PLA2) heterotrimer that acts as a potent presynaptic neurotoxin by blocking synaptic transmission and synaptic vesicle recycling. Enzymatic activity is essential for the neurotoxic effects. May act by binding in a calcium-dependent fashion to neurotonal pentraxin-1 (NPTX1) and neurotonal pentraxin-2 (NPTX2), but not to neuronal pentraxin receptor (NPTXR). Also binds to taipoxin-associated calcium binding protein 49 (RCN2), a protein localized in the lumen of endoplasmic reticulum. In terms of biological role, monomer (beta chain): Snake venom phospholipase A2 homolog that is neither toxic nor enzymatically active. Does not bind calcium. The protein is Neutral phospholipase A2 homolog cannitoxin beta chain 2 of Oxyuranus scutellatus canni (Papuan taipan).